We begin with the raw amino-acid sequence, 542 residues long: Sensor protein CitS (542 aa).

Topologically, residues 1–13 (MVKKRFHFSLQTK) are cytoplasmic. The chain crosses the membrane as a helical span at residues 14–34 (IMGLIAALLVFVIGVLTITLA). The Extracellular segment spans residues 35–175 (VQHTQGERRQ…TEQSIKKHLR (141 aa)). Residues 176 to 196 (NLSVIAVLVLLLGFIGAAVLA) form a helical membrane-spanning segment. Topologically, residues 197–542 (KSIRKDTLGL…PFDSHRDCGG (346 aa)) are cytoplasmic. The PAS domain maps to 216 to 279 (RERNAMLFAI…MSVLEKGEML (64 aa)). The 193-residue stretch at 336–528 (AQTHEFSNKL…VFTVFIPKEK (193 aa)) folds into the Histidine kinase domain. Histidine 339 bears the Phosphohistidine; by autocatalysis mark.

Its subcellular location is the cell membrane. It catalyses the reaction ATP + protein L-histidine = ADP + protein N-phospho-L-histidine.. Member of the two-component regulatory system CitT/CitS. Regulates the expression of the citM-yflN operon. Functions probably as a membrane-associated protein kinase that phosphorylates CitT in response to environmental citrate or Mg(2+)-citrate complex. This Bacillus subtilis (strain 168) protein is Sensor protein CitS (citS).